A 423-amino-acid chain; its full sequence is Gamma-glutamyl phosphate reductase (423 aa).

This sequence belongs to the gamma-glutamyl phosphate reductase family.

It localises to the cytoplasm. It carries out the reaction L-glutamate 5-semialdehyde + phosphate + NADP(+) = L-glutamyl 5-phosphate + NADPH + H(+). Its pathway is amino-acid biosynthesis; L-proline biosynthesis; L-glutamate 5-semialdehyde from L-glutamate: step 2/2. In terms of biological role, catalyzes the NADPH-dependent reduction of L-glutamate 5-phosphate into L-glutamate 5-semialdehyde and phosphate. The product spontaneously undergoes cyclization to form 1-pyrroline-5-carboxylate. In Brucella suis (strain ATCC 23445 / NCTC 10510), this protein is Gamma-glutamyl phosphate reductase.